The sequence spans 424 residues: C4-dicarboxylate transport protein (424 aa).

8 helical membrane-spanning segments follow: residues 4-24 (SLFKSLYFQVLAAIAIGVLLG), 44-64 (LIKMIIAPVIFCTVVSGIAGM), 76-96 (VALIYFEVVSTIALIIGLVVV), 142-162 (IGAFASGNILQVLLFAILFGF), 184-206 (VFFGIINMIMRLAPVGAFGAMAF), 222-242 (LIVCFYITCLLFVVVVLGLIA), 326-346 (IWHQITLLVVLLLSSKGAAGV), and 352-372 (IVLAATLSAVGHLPVAGLALI).

It belongs to the dicarboxylate/amino acid:cation symporter (DAACS) (TC 2.A.23) family.

The protein localises to the cell inner membrane. Responsible for the transport of dicarboxylates such as succinate, fumarate, and malate from the periplasm across the membrane. This Erwinia tasmaniensis (strain DSM 17950 / CFBP 7177 / CIP 109463 / NCPPB 4357 / Et1/99) protein is C4-dicarboxylate transport protein.